Reading from the N-terminus, the 103-residue chain is MLTLSLSHFLILGAILFAISVVGIFLNRKNLLVLLMAIELMLLAVNMNFVAFSHYLQDLSGQIFVFFILTVAAAESAIGLAILIVLFRNLKSIHVDDLGSLKG.

Transmembrane regions (helical) follow at residues 6-26, 32-52, and 63-83; these read LSHF…GIFL, LVLL…FVAF, and IFVF…LAIL.

Belongs to the complex I subunit 4L family. NDH-1 is composed of 14 different subunits. Subunits NuoA, H, J, K, L, M, N constitute the membrane sector of the complex.

It localises to the cell inner membrane. It carries out the reaction a quinone + NADH + 5 H(+)(in) = a quinol + NAD(+) + 4 H(+)(out). Its function is as follows. NDH-1 shuttles electrons from NADH, via FMN and iron-sulfur (Fe-S) centers, to quinones in the respiratory chain. The immediate electron acceptor for the enzyme in this species is believed to be ubiquinone. Couples the redox reaction to proton translocation (for every two electrons transferred, four hydrogen ions are translocated across the cytoplasmic membrane), and thus conserves the redox energy in a proton gradient. The chain is NADH-quinone oxidoreductase subunit K from Dechloromonas aromatica (strain RCB).